The following is a 704-amino-acid chain: Polyribonucleotide nucleotidyltransferase (704 aa).

Positions 487 and 493 each coordinate Mg(2+). In terms of domain architecture, KH spans 554–613 (PRLLTIKIHPDKIREVIGKGGSTIQAITKETGTQIDIQDDGTIIIASVNAIAAQAAKSRI). Residues 623-691 (GRIYEGKVAK…KQGRIRLSIK (69 aa)) form the S1 motif domain.

The protein belongs to the polyribonucleotide nucleotidyltransferase family. As to quaternary structure, component of the RNA degradosome, which is a multiprotein complex involved in RNA processing and mRNA degradation. It depends on Mg(2+) as a cofactor.

It localises to the cytoplasm. It carries out the reaction RNA(n+1) + phosphate = RNA(n) + a ribonucleoside 5'-diphosphate. In terms of biological role, involved in mRNA degradation. Catalyzes the phosphorolysis of single-stranded polyribonucleotides processively in the 3'- to 5'-direction. The polypeptide is Polyribonucleotide nucleotidyltransferase (Xanthomonas campestris pv. campestris (strain 8004)).